Consider the following 528-residue polypeptide: GMP synthase [glutamine-hydrolyzing] (528 aa).

The Glutamine amidotransferase type-1 domain occupies 13-204 (AIVILDFGSQ…VYDICSCEPD (192 aa)). Cysteine 90 serves as the catalytic Nucleophile. Catalysis depends on residues histidine 178 and glutamate 180. In terms of domain architecture, GMPS ATP-PPase spans 205–403 (WTTNLFIDEA…LGLPDEIVRR (199 aa)). 232–238 (SGGVDSS) lines the ATP pocket.

As to quaternary structure, homodimer.

The enzyme catalyses XMP + L-glutamine + ATP + H2O = GMP + L-glutamate + AMP + diphosphate + 2 H(+). It functions in the pathway purine metabolism; GMP biosynthesis; GMP from XMP (L-Gln route): step 1/1. In terms of biological role, catalyzes the synthesis of GMP from XMP. The chain is GMP synthase [glutamine-hydrolyzing] from Prochlorococcus marinus (strain NATL2A).